The sequence spans 362 residues: H-2 class I histocompatibility antigen, D-K alpha chain (362 aa).

Residues 1–24 (MGAMVPRTLLLLLAAALAPAQTRA) form the signal peptide. The interval 25 to 114 (GPHSLRYFET…LLRYYNQSEG (90 aa)) is alpha-1. At 25–306 (GPHSLRYFET…RWEPPPSTDS (282 aa)) the chain is on the extracellular side. The N-linked (GlcNAc...) asparagine glycan is linked to N110. An alpha-2 region spans residues 115-206 (GSHTIQRLSG…ELGNATLLHT (92 aa)). An intrachain disulfide couples C125 to C188. N-linked (GlcNAc...) asparagine glycans are attached at residues N200 and N280. The tract at residues 207–298 (DSPKAHVTHH…GLPEPLTLRW (92 aa)) is alpha-3. Residues 209–297 (PKAHVTHHPR…EGLPEPLTLR (89 aa)) form the Ig-like C1-type domain. An intrachain disulfide couples C227 to C283. Residues 299–306 (EPPPSTDS) are connecting peptide. Residues 307–333 (YMVIVAVLGVLGAVAIIGAVVAFVMMM) traverse the membrane as a helical segment. At 334-362 (RRNTGGKGGDYTLTPGSQSSEMSLPDCKA) the chain is on the cytoplasmic side. The interval 340 to 362 (KGGDYTLTPGSQSSEMSLPDCKA) is disordered. Phosphoserine is present on residues S353 and S356.

Belongs to the MHC class I family. Heterodimer of an alpha chain and a beta chain (beta-2-microglobulin). In terms of processing, polyubiquitinated in case of infection by murid herpesvirus 4, by the viral E3 ligase K3 (mK3), leading to target the protein for rapid degradation by the endoplasmic reticulum-associated degradation (ERAD) system. Ubiquitination takes place on lysine, as well as serine and threonine residues present in the cytoplasmic tail. Hydroxylated serine and threonine residues in the cytoplasmic tail are subject to ubiquitination via ester bonds instead of the classical isopeptide linkage. Hydroxylation of residues in the cytoplasmic tail.

The protein localises to the membrane. In terms of biological role, involved in the presentation of foreign antigens to the immune system. This chain is H-2 class I histocompatibility antigen, D-K alpha chain (H2-D1), found in Mus musculus (Mouse).